The sequence spans 85 residues: Large ribosomal subunit protein bL27 (85 aa).

Positions 1–22 (MAHKKGQGSTQNNRDSAGRRLG) are disordered.

This sequence belongs to the bacterial ribosomal protein bL27 family.

This chain is Large ribosomal subunit protein bL27, found in Sulfurimonas denitrificans (strain ATCC 33889 / DSM 1251) (Thiomicrospira denitrificans (strain ATCC 33889 / DSM 1251)).